A 255-amino-acid chain; its full sequence is 1-(5-phosphoribosyl)-5-[(5-phosphoribosylamino)methylideneamino] imidazole-4-carboxamide isomerase (255 aa).

Asp-8 (proton acceptor) is an active-site residue. Asp-129 (proton donor) is an active-site residue.

It belongs to the HisA/HisF family.

It is found in the cytoplasm. The enzyme catalyses 1-(5-phospho-beta-D-ribosyl)-5-[(5-phospho-beta-D-ribosylamino)methylideneamino]imidazole-4-carboxamide = 5-[(5-phospho-1-deoxy-D-ribulos-1-ylimino)methylamino]-1-(5-phospho-beta-D-ribosyl)imidazole-4-carboxamide. It participates in amino-acid biosynthesis; L-histidine biosynthesis; L-histidine from 5-phospho-alpha-D-ribose 1-diphosphate: step 4/9. In Gloeobacter violaceus (strain ATCC 29082 / PCC 7421), this protein is 1-(5-phosphoribosyl)-5-[(5-phosphoribosylamino)methylideneamino] imidazole-4-carboxamide isomerase.